We begin with the raw amino-acid sequence, 219 residues long: Large ribosomal subunit protein uL3 (219 aa).

The segment at 133-153 (GRASHGNSRSHNVPGSIGMAQ) is disordered. Q153 is subject to N5-methylglutamine.

This sequence belongs to the universal ribosomal protein uL3 family. As to quaternary structure, part of the 50S ribosomal subunit. Forms a cluster with proteins L14 and L19. Post-translationally, methylated by PrmB.

Its function is as follows. One of the primary rRNA binding proteins, it binds directly near the 3'-end of the 23S rRNA, where it nucleates assembly of the 50S subunit. The sequence is that of Large ribosomal subunit protein uL3 from Burkholderia thailandensis (strain ATCC 700388 / DSM 13276 / CCUG 48851 / CIP 106301 / E264).